Reading from the N-terminus, the 324-residue chain is UDP-N-acetylenolpyruvoylglucosamine reductase (324 aa).

The region spanning 36–203 (FRAGGLAELM…TSVLFEGYPE (168 aa)) is the FAD-binding PCMH-type domain. Residue Arg-183 is part of the active site. Catalysis depends on Ser-232, which acts as the Proton donor. Glu-302 is an active-site residue.

This sequence belongs to the MurB family. Requires FAD as cofactor.

The protein resides in the cytoplasm. It catalyses the reaction UDP-N-acetyl-alpha-D-muramate + NADP(+) = UDP-N-acetyl-3-O-(1-carboxyvinyl)-alpha-D-glucosamine + NADPH + H(+). The protein operates within cell wall biogenesis; peptidoglycan biosynthesis. In terms of biological role, cell wall formation. This is UDP-N-acetylenolpyruvoylglucosamine reductase from Rhizobium etli (strain CIAT 652).